The sequence spans 344 residues: Dihydroorotase (344 aa).

His14 and His16 together coordinate Zn(2+). Substrate is bound by residues 16–18 and Asn42; that span reads HLR. 3 residues coordinate Zn(2+): Lys100, His137, and His175. Lys100 carries the post-translational modification N6-carboxylysine. His137 is a binding site for substrate. Leu220 contributes to the substrate binding site. Asp248 is a Zn(2+) binding site. The active site involves Asp248. Substrate is bound by residues His252 and Ala264.

It belongs to the metallo-dependent hydrolases superfamily. DHOase family. Class II DHOase subfamily. Homodimer. Zn(2+) serves as cofactor.

It carries out the reaction (S)-dihydroorotate + H2O = N-carbamoyl-L-aspartate + H(+). The protein operates within pyrimidine metabolism; UMP biosynthesis via de novo pathway; (S)-dihydroorotate from bicarbonate: step 3/3. Functionally, catalyzes the reversible cyclization of carbamoyl aspartate to dihydroorotate. The polypeptide is Dihydroorotase (Cupriavidus pinatubonensis (strain JMP 134 / LMG 1197) (Cupriavidus necator (strain JMP 134))).